A 404-amino-acid chain; its full sequence is Cysteine desulfurase IscS (404 aa).

Pyridoxal 5'-phosphate contacts are provided by residues 73–74 (AT), Asn153, Gln181, and 201–203 (SAH). Position 204 is an N6-(pyridoxal phosphate)lysine (Lys204). Pyridoxal 5'-phosphate is bound at residue Thr241. Cys327 (cysteine persulfide intermediate) is an active-site residue. Cys327 contributes to the [2Fe-2S] cluster binding site.

This sequence belongs to the class-V pyridoxal-phosphate-dependent aminotransferase family. NifS/IscS subfamily. Homodimer. Forms a heterotetramer with IscU, interacts with other sulfur acceptors. Pyridoxal 5'-phosphate is required as a cofactor.

It localises to the cytoplasm. The catalysed reaction is (sulfur carrier)-H + L-cysteine = (sulfur carrier)-SH + L-alanine. The protein operates within cofactor biosynthesis; iron-sulfur cluster biosynthesis. Its function is as follows. Master enzyme that delivers sulfur to a number of partners involved in Fe-S cluster assembly, tRNA modification or cofactor biosynthesis. Catalyzes the removal of elemental sulfur atoms from cysteine to produce alanine. Functions as a sulfur delivery protein for Fe-S cluster synthesis onto IscU, an Fe-S scaffold assembly protein, as well as other S acceptor proteins. The sequence is that of Cysteine desulfurase IscS from Anaeromyxobacter sp. (strain K).